The following is a 159-amino-acid chain: Neuroglobin-1 (159 aa).

The 149-residue stretch at 3-151 (KLTEKEKELI…VVAAMSRGWA (149 aa)) folds into the Globin domain. Heme b contacts are provided by H66 and H98.

This sequence belongs to the globin family. As to quaternary structure, monomer. Homodimers and homotetramers. Mainly monomeric but also detected as part of homodimers and homotetramers.

The protein localises to the cytoplasm. It is found in the cytosol. It localises to the mitochondrion matrix. The enzyme catalyses Fe(III)-heme b-[protein] + nitric oxide + H2O = Fe(II)-heme b-[protein] + nitrite + 2 H(+). In terms of biological role, monomeric globin with a bis-histidyl six-coordinate heme-iron atom through which it can bind dioxygen, carbon monoxide and nitric oxide. Could help transport oxygen and increase its availability to the metabolically active neuronal tissues, though its low quantity in tissues as well as its high affinity for dioxygen, which may limit its oxygen-releasing ability, argue against it. The ferrous/deoxygenated form exhibits a nitrite reductase activity and it could produce nitric oxide which in turn inhibits cellular respiration in response to hypoxia. In its ferrous/deoxygenated state, it may also exhibit GDI (Guanine nucleotide Dissociation Inhibitor) activity toward heterotrimeric G-alpha proteins, thereby regulating signal transduction to facilitate neuroprotective responses in the wake of hypoxia and associated oxidative stress. The polypeptide is Neuroglobin-1 (ngb1) (Oncorhynchus mykiss (Rainbow trout)).